Reading from the N-terminus, the 1150-residue chain is Protogenin (1150 aa).

The first 35 residues, 1–35, serve as a signal peptide directing secretion; it reads MAPPLRPLARLRPPGMLLRALLLLLLLSPLPGVWC. 4 Ig-like domains span residues 36–130, 135–222, 235–322, and 327–411; these read FSEL…AHLA, SAFE…ASLT, PTII…ATLT, and PSFV…ARLT. Residues 36–949 are Extracellular-facing; sequence FSELSFVKEP…YYHLDQKSMT (914 aa). 4 disulfide bridges follow: Cys-60–Cys-113, Cys-156–Cys-205, Cys-256–Cys-304, and Cys-348–Cys-395. A glycan (N-linked (GlcNAc...) asparagine) is linked at Asn-90. Fibronectin type-III domains follow at residues 421–515, 517–613, 618–717, 724–817, and 822–917; these read APYN…TLED, PLRP…TPKA, APKS…VRDR, PPHH…TLPE, and PPVG…VLPK. Asn-488 carries N-linked (GlcNAc...) asparagine glycosylation. An N-linked (GlcNAc...) asparagine glycan is attached at Asn-630. A helical transmembrane segment spans residues 950 to 970; the sequence is GIAVGVGIALTCILICVLILI. The Cytoplasmic segment spans residues 971 to 1150; that stretch reads YRSKARKSSA…SVISTTPPNL (180 aa). Disordered stretches follow at residues 981 to 1002 and 1086 to 1150; these read SKTA…ASGN and ISDE…PPNL. Composition is skewed to polar residues over residues 983–1000 and 1092–1102; these read TAQN…SLAS and PSSPGQTTSFS. Basic and acidic residues predominate over residues 1110–1138; that stretch reads DTEHSANSEGSHETGDSGRFSHESNDEIH. The segment covering 1141–1150 has biased composition (polar residues); it reads SVISTTPPNL.

The protein belongs to the immunoglobulin superfamily. DCC family.

It is found in the membrane. Functionally, may play a role in anteroposterior axis elongation. This Homo sapiens (Human) protein is Protogenin.